A 408-amino-acid chain; its full sequence is Dual-specificity RNA methyltransferase RlmN (408 aa).

Glu-120 (proton acceptor) is an active-site residue. Residues Glu-126 to Leu-375 form the Radical SAM core domain. Residues Cys-133 and Cys-378 are joined by a disulfide bond. The [4Fe-4S] cluster site is built by Cys-140, Cys-144, and Cys-147. S-adenosyl-L-methionine contacts are provided by residues Gly-204–Glu-205, Ser-236, Ser-258–His-260, and Asn-335. Cys-378 (S-methylcysteine intermediate) is an active-site residue.

It belongs to the radical SAM superfamily. RlmN family. Requires [4Fe-4S] cluster as cofactor.

It is found in the cytoplasm. The catalysed reaction is adenosine(2503) in 23S rRNA + 2 reduced [2Fe-2S]-[ferredoxin] + 2 S-adenosyl-L-methionine = 2-methyladenosine(2503) in 23S rRNA + 5'-deoxyadenosine + L-methionine + 2 oxidized [2Fe-2S]-[ferredoxin] + S-adenosyl-L-homocysteine. It carries out the reaction adenosine(37) in tRNA + 2 reduced [2Fe-2S]-[ferredoxin] + 2 S-adenosyl-L-methionine = 2-methyladenosine(37) in tRNA + 5'-deoxyadenosine + L-methionine + 2 oxidized [2Fe-2S]-[ferredoxin] + S-adenosyl-L-homocysteine. Functionally, specifically methylates position 2 of adenine 2503 in 23S rRNA and position 2 of adenine 37 in tRNAs. m2A2503 modification seems to play a crucial role in the proofreading step occurring at the peptidyl transferase center and thus would serve to optimize ribosomal fidelity. This Rhizobium johnstonii (strain DSM 114642 / LMG 32736 / 3841) (Rhizobium leguminosarum bv. viciae) protein is Dual-specificity RNA methyltransferase RlmN.